The primary structure comprises 230 residues: Ribonuclease 3 (230 aa).

Positions 5-125 (YSRFYNILGY…VIGAIYLDSD (121 aa)) constitute an RNase III domain. Residue glutamate 40 coordinates Mg(2+). Aspartate 44 is a catalytic residue. 2 residues coordinate Mg(2+): aspartate 111 and glutamate 114. The active site involves glutamate 114. The DRBM domain maps to 153-223 (DSKSKLQEIL…AEKMIEMLSQ (71 aa)).

It belongs to the ribonuclease III family. As to quaternary structure, homodimer. Mg(2+) is required as a cofactor.

The protein localises to the cytoplasm. It carries out the reaction Endonucleolytic cleavage to 5'-phosphomonoester.. Its function is as follows. Digests double-stranded RNA. Involved in the processing of primary rRNA transcript to yield the immediate precursors to the large and small rRNAs (23S and 16S). Processes some mRNAs, and tRNAs when they are encoded in the rRNA operon. Processes pre-crRNA and tracrRNA of type II CRISPR loci if present in the organism. The chain is Ribonuclease 3 from Francisella tularensis subsp. holarctica (strain FTNF002-00 / FTA).